The chain runs to 399 residues: Elongation factor Tu (399 aa).

The tr-type G domain maps to 10–204 (KPHVNIGTIG…AVDANIPEPE (195 aa)). The interval 19 to 26 (GHVDHGKT) is G1. 19 to 26 (GHVDHGKT) serves as a coordination point for GTP. Position 26 (Thr26) interacts with Mg(2+). Residues 60 to 64 (GITIN) are G2. The interval 81–84 (DCPG) is G3. GTP is bound by residues 81-85 (DCPGH) and 136-139 (NKCD). A G4 region spans residues 136 to 139 (NKCD). Residues 174–176 (SGL) are G5.

The protein belongs to the TRAFAC class translation factor GTPase superfamily. Classic translation factor GTPase family. EF-Tu/EF-1A subfamily. As to quaternary structure, monomer.

It localises to the cytoplasm. The catalysed reaction is GTP + H2O = GDP + phosphate + H(+). GTP hydrolase that promotes the GTP-dependent binding of aminoacyl-tRNA to the A-site of ribosomes during protein biosynthesis. This chain is Elongation factor Tu, found in Synechococcus sp. (strain WH7803).